The sequence spans 638 residues: Guanylate-binding protein 7 (638 aa).

The tract at residues 1–310 (MASGPNMEAP…DAINSGDVPC (310 aa)) is GTPase domain (Globular). Positions 35–277 (TQPVVVVAIV…FCSYIFSNSK (243 aa)) constitute a GB1/RHD3-type G domain. GTP is bound by residues 45–52 (GLYRTGKS), 67–69 (LGT), and 97–101 (DTEGL). The interval 311–638 (LENAVTTLAQ…TQNSDKVRKL (328 aa)) is interaction with the CYBA-CYBB complex. Residues 590 to 638 (SSLGAKILDGFGDVLISVVPGSGKYFGLGLKILSSQMNQTQNSDKVRKL) are C-terminal tail; required for its localization to cytoplasmic vesicle.

It belongs to the TRAFAC class dynamin-like GTPase superfamily. GB1/RHD3 GTPase family. GB1 subfamily. Monomer and dimer. Interacts with CYBA, CYBA-CYBB complex and ATG4B. Interacts (via GB1/RHD3-type G domain) with NCF2 and NCF2-NCF4 complex.

It is found in the cytoplasmic vesicle membrane. It carries out the reaction GTP + H2O = GDP + phosphate + H(+). The catalysed reaction is GDP + H2O = GMP + phosphate + H(+). Its activity is regulated as follows. Inhibited by orthovanadate, berylium fluoride and aluminum flouride. Interferon (IFN)-inducible GTPase that plays important roles in innate immunity against a diverse range of bacterial, viral and protozoan pathogens. Hydrolyzes GTP to GMP in two consecutive cleavage reactions and predominantly uses GTP and not GDP or GMP as the substrate. Following infection, recruited to the pathogen-containing vacuoles or vacuole-escaped bacteria and acts as a positive regulator of inflammasome assembly by promoting the release of inflammasome ligands from bacteria. Acts by promoting lysis of pathogen-containing vacuoles, releasing pathogens into the cytosol. Following pathogen release in the cytosol, promotes recruitment of proteins that mediate bacterial cytolysis, such as Gm12250/Irgb10: this liberates ligands that are detected by inflammasomes, such as lipopolysaccharide (LPS) that activates the non-canonical CASP4/CASP11 inflammasome or double-stranded DNA (dsDNA) that activates the AIM2 inflammasome. Also promotes IFN-gamma-mediated host defense against bacterial infections by regulating oxidative responses and bacteriolytic peptide generation. May help to assemble NADPH oxidase on phagosomal membranes by acting as a bridging protein between NADPH oxidase cytosolic subunits NCF2-NCF4 and the membrane subunits CYBA-CYBB. Participates along with GBP1 in trafficking monoubiquinated protein cargo to autolysosomes for generating ubiquitin-derived antimicrobial peptides. Facilitates influenza A virus replication by inhibiting the activation of NF-kappaB and JAK-STAT signaling pathways and the expression of type I, type III interferons and pro-inflammatory cytokines. Confers protection to several pathogens, including the bacterial pathogens Listeria monocytogenes and Mycobacterium bovis BCG as well as the protozoan pathogen Toxoplasma gondii. Required for disruption of the parasitophorous vacuole formed following T.gondii infection and subsequent killing of the parasite. The polypeptide is Guanylate-binding protein 7 (Gbp7) (Mus musculus (Mouse)).